Reading from the N-terminus, the 904-residue chain is Nitrate reductase [NADH] 1 (904 aa).

2 stretches are compositionally biased toward polar residues: residues 1 to 10 (MAASVENRQF) and 39 to 50 (STNFQKKPNSTI). A disordered region spans residues 1 to 65 (MAASVENRQF…SSEDDDDDDE (65 aa)). Over residues 56–65 (SSEDDDDDDE) the composition is skewed to acidic residues. C183 is a Mo-molybdopterin binding site. Residues 531–606 (SKMYSMSEVR…LEEFRIGELL (76 aa)) enclose the Cytochrome b5 heme-binding domain. H566 and H589 together coordinate heme. The region spanning 647–759 (REKIPCKLID…KGPLGHIEYQ (113 aa)) is the FAD-binding FR-type domain. Residues 699-702 (RAYT), 716-720 (VVKIY), F721, F728, 733-735 (QMS), and T786 each bind FAD.

Belongs to the nitrate reductase family. As to quaternary structure, homodimer. The cofactor is FAD. Requires heme as cofactor. Mo-molybdopterin serves as cofactor.

The catalysed reaction is nitrite + NAD(+) + H2O = nitrate + NADH + H(+). Regulated by the nitrogen source and controlled by the circadian rhythm. Nitrate reductase is a key enzyme involved in the first step of nitrate assimilation in plants, fungi and bacteria. In Nicotiana tabacum (Common tobacco), this protein is Nitrate reductase [NADH] 1 (NIA1).